A 218-amino-acid polypeptide reads, in one-letter code: Synaptonemal complex central element protein 2 (218 aa).

Residues 1 to 32 (MERQGVDVPHVKCKDQEPQPLGESKEHPRWEE) are compositionally biased toward basic and acidic residues. Residues 1–42 (MERQGVDVPHVKCKDQEPQPLGESKEHPRWEENCEEEAGGGP) form a disordered region. Positions 61–87 (SSLDSSIDILQKRAQELIENINKSRQK) form a coiled coil. Positions 171 to 218 (RWGPDHSRGKSPPRPGNSQPPDVFVSSVAETTSQATASEVQTNRDGEC) are disordered. Over residues 198-211 (VAETTSQATASEVQ) the composition is skewed to polar residues.

The protein belongs to the SYCE family. In terms of assembly, homodimer. Found in a complex with SYCP1 and SYCE1. Interacts with SYCP1, SYCE1 and SYCE3. Interacts with TEX12.

The protein resides in the nucleus. The protein localises to the chromosome. In terms of biological role, major component of the transverse central element of synaptonemal complexes (SCS), formed between homologous chromosomes during meiotic prophase. Requires SYCP1 in order to be incorporated into the central element. May have a role in the synaptonemal complex assembly, stabilization and recombination. The polypeptide is Synaptonemal complex central element protein 2 (SYCE2) (Homo sapiens (Human)).